A 188-amino-acid polypeptide reads, in one-letter code: Ribosome-recycling factor (188 aa).

It belongs to the RRF family.

It is found in the cytoplasm. In terms of biological role, responsible for the release of ribosomes from messenger RNA at the termination of protein biosynthesis. May increase the efficiency of translation by recycling ribosomes from one round of translation to another. The polypeptide is Ribosome-recycling factor (Caulobacter sp. (strain K31)).